The sequence spans 135 residues: ATP synthase epsilon chain (135 aa).

This sequence belongs to the ATPase epsilon chain family. In terms of assembly, F-type ATPases have 2 components, CF(1) - the catalytic core - and CF(0) - the membrane proton channel. CF(1) has five subunits: alpha(3), beta(3), gamma(1), delta(1), epsilon(1). CF(0) has three main subunits: a, b and c.

Its subcellular location is the cellular thylakoid membrane. Functionally, produces ATP from ADP in the presence of a proton gradient across the membrane. This chain is ATP synthase epsilon chain, found in Prochlorococcus marinus (strain MIT 9211).